The primary structure comprises 106 residues: COX assembly mitochondrial protein homolog (106 aa).

N-acetylalanine is present on Ala2. Positions 28–71 constitute a CHCH domain; it reads KERCSEQVQDFTKCCKNSGVLMVVKCRKENSALKECLTAYYNDP. 2 consecutive short sequence motifs (cx9C motif) follow at residues 31 to 41 and 53 to 63; these read CSEQVQDFTKC and CRKENSALKEC. 2 disulfides stabilise this stretch: Cys31/Cys63 and Cys41/Cys53.

The protein belongs to the CMC family. In terms of assembly, component of the MITRAC (mitochondrial translation regulation assembly intermediate of cytochrome c oxidase complex) complex, the core components of this complex being COA3/MITRAC12 and COX14.

It is found in the mitochondrion. Component of the MITRAC (mitochondrial translation regulation assembly intermediate of cytochrome c oxidase complex) complex, that regulates cytochrome c oxidase assembly. The sequence is that of COX assembly mitochondrial protein homolog (CMC1) from Homo sapiens (Human).